The chain runs to 367 residues: Ferrochelatase (367 aa).

Positions 213 and 294 each coordinate Fe cation.

This sequence belongs to the ferrochelatase family.

Its subcellular location is the cytoplasm. The catalysed reaction is heme b + 2 H(+) = protoporphyrin IX + Fe(2+). It participates in porphyrin-containing compound metabolism; protoheme biosynthesis; protoheme from protoporphyrin-IX: step 1/1. Its function is as follows. Catalyzes the ferrous insertion into protoporphyrin IX. This Polaromonas sp. (strain JS666 / ATCC BAA-500) protein is Ferrochelatase.